We begin with the raw amino-acid sequence, 154 residues long: Large ribosomal subunit protein uL13 (154 aa).

The interval 132–154 (PHEAQQPEVLDVKSMNAKNTRSA) is disordered.

It belongs to the universal ribosomal protein uL13 family. Part of the 50S ribosomal subunit.

This protein is one of the early assembly proteins of the 50S ribosomal subunit, although it is not seen to bind rRNA by itself. It is important during the early stages of 50S assembly. The sequence is that of Large ribosomal subunit protein uL13 from Paracoccus denitrificans (strain Pd 1222).